Consider the following 656-residue polypeptide: MSAQVEQLEFQAEARQLLDLMVHSVYSNKDAFLRELISNASDALDKLRLEAFRNKDLDPRTVDTSDLHIEIEVDKNTRILTVRDNGIGMTRAEVVDLIGTLAKSGTAKLRQKLHAAKNLKDTAASEGLIGQFGIGFYSSFMVANKVELLTRKAGETAATRWSSDGEATYTIESVDEAPQGTSVTLHLKPEDFEDELHDYTSEWKIRELVKKYSDFIAWPIRMEVERRAPATSDGEGADGEEQVTIETQTINSMKALWTKSKDEVSEDEYKEFYKHIAHAWDDPLEVIAMKAEGTFEYQALLFIPSHAPFDLFNSDAKIGMQLYVKRVFIMSDCDQLMPMYLRFVKGVVDAEDMSLNVSREILQQNRQINAIRRRLTKKVLSAIKDLQAERPQDYRTFWTQFGKVLKEGLMSDSDNRDTLLHISSFASTHSDEEPTTLAQYVERMKDGQDQIFYATGESRQQVMNSPHLEAFKAKGYEVLLLTDPVDEVWVGMAPEFDGKPLKSVARGEVDLESEEEKTAHEAERKEQEQNFAGLVNWLKETLSDHVKEVRLSTRLTESPACLITDAFGITPALARIYRASGQDVPFGKRILELNPNHPLITGLQQAHENGGDDTHLRQLSETAELLYGTALLAEGGALENPAKFAGLLADLLSRSM.

Positions 1–359 are a; substrate-binding; it reads MSAQVEQLEF…AEDMSLNVSR (359 aa). The b stretch occupies residues 360 to 575; the sequence is EILQQNRQIN…AFGITPALAR (216 aa). Positions 576-656 are c; the sequence is IYRASGQDVP…LLADLLSRSM (81 aa).

It belongs to the heat shock protein 90 family. As to quaternary structure, homodimer.

The protein localises to the cytoplasm. Molecular chaperone. Has ATPase activity. The sequence is that of Chaperone protein HtpG from Mycobacterium leprae (strain TN).